The following is a 594-amino-acid chain: Suppressor of hairless protein (594 aa).

The segment at 20 to 87 (ETTVVNPNGS…QQQQQHQQQM (68 aa)) is disordered. Positions 58–87 (QQQQQQLQVHHQQQQQQQQQQQQQQHQQQM) are enriched in low complexity. DNA-binding regions lie at residues 131 to 141 (QKSYGNEKRFF), 239 to 244 (SKPSKK), and 266 to 271 (RLRSQT). The region spanning 429–519 (PIVNSLNLNG…YATGLTFTYT (91 aa)) is the IPT/TIG domain. 2 stretches are compositionally biased toward low complexity: residues 542-562 (NNNN…AGSP) and 569-580 (QQQQQQHQALPS). The interval 542–594 (NNNNNITSISNNNNSNNAGSPAAGGGLQQQQQQHQALPSISEVQWNSHGSGLS) is disordered. The segment covering 582–594 (SEVQWNSHGSGLS) has biased composition (polar residues).

It belongs to the Su(H) family. In terms of assembly, interacts with activated cleaved Notch. Interacts with Hairless, this interaction preventing its DNA-binding activity. Interacts with insv (via BEN domain).

It is found in the nucleus. Its subcellular location is the cytoplasm. Functionally, transcriptional regulator that plays a central role in Notch signaling, a signaling pathway involved in cell-cell communication that regulates a broad spectrum of cell-fate determinations. Binds directly the 5'-GTGRGAR-3' DNA consensus sequence, which is present in the regulatory region of several genes. Acts as a transcriptional repressor when it is not associated with Notch proteins. When associated with some Notch protein, it acts as a transcriptional activator that activates transcription of Notch target genes. Required for transcription of Sim. Specifically binds to the immunoglobulin kappa-type J segment recombination signal sequence. Required for neurogenesis in imaginal disks. In the larval brain, might play a role as a transducer of Notch signaling during type II neuroblast development. Also functions independently of the Notch pathway, in the development of the bristle sensory organ precursor cell. This chain is Suppressor of hairless protein (Su(H)), found in Drosophila melanogaster (Fruit fly).